A 499-amino-acid polypeptide reads, in one-letter code: D-alanine--D-alanyl carrier protein ligase (499 aa).

Position 152–153 (threonine 152–serine 153) interacts with ATP. Position 197 (aspartate 197) interacts with D-alanine. ATP contacts are provided by residues asparagine 292 to threonine 297, aspartate 372, tyrosine 384 to arginine 387, and lysine 485. Lysine 485 contributes to the D-alanine binding site.

Belongs to the ATP-dependent AMP-binding enzyme family. DltA subfamily.

The protein resides in the cytoplasm. It catalyses the reaction holo-[D-alanyl-carrier protein] + D-alanine + ATP = D-alanyl-[D-alanyl-carrier protein] + AMP + diphosphate. It participates in cell wall biogenesis; lipoteichoic acid biosynthesis. Catalyzes the first step in the D-alanylation of lipoteichoic acid (LTA), the activation of D-alanine and its transfer onto the D-alanyl carrier protein (Dcp) DltC. In an ATP-dependent two-step reaction, forms a high energy D-alanyl-AMP intermediate, followed by transfer of the D-alanyl residue as a thiol ester to the phosphopantheinyl prosthetic group of the Dcp. D-alanylation of LTA plays an important role in modulating the properties of the cell wall in Gram-positive bacteria, influencing the net charge of the cell wall. The chain is D-alanine--D-alanyl carrier protein ligase from Lactococcus lactis subsp. lactis (strain IL1403) (Streptococcus lactis).